The primary structure comprises 413 residues: Putative glutamate--cysteine ligase 2 (413 aa).

Residues 392-413 (GGVCALSTPQGDPLPGWAERLH) form a disordered region.

This sequence belongs to the glutamate--cysteine ligase type 2 family. YbdK subfamily.

The catalysed reaction is L-cysteine + L-glutamate + ATP = gamma-L-glutamyl-L-cysteine + ADP + phosphate + H(+). Its function is as follows. ATP-dependent carboxylate-amine ligase which exhibits weak glutamate--cysteine ligase activity. This chain is Putative glutamate--cysteine ligase 2, found in Bordetella bronchiseptica (strain ATCC BAA-588 / NCTC 13252 / RB50) (Alcaligenes bronchisepticus).